The primary structure comprises 209 residues: CASP-like protein 2A1 (209 aa).

Topologically, residues 1–38 (MSKMAEEKVLAAPATVDGGMQSSGDLQASSAAAARVRP) are cytoplasmic. The chain crosses the membrane as a helical span at residues 39-59 (VETLLRAAPLGLCVAAMAIML). At 60–80 (RNSVTNEYGTVSYSDLGGFKY) the chain is on the extracellular side. The chain crosses the membrane as a helical span at residues 81–101 (LVYANGLCAAYSLASAFYIAV). Residues 102 to 109 (PRPATLSR) lie on the Cytoplasmic side of the membrane. A helical membrane pass occupies residues 110 to 130 (SWVVFLLDQVFTYLILAAGAA). Residues 131-163 (SAELLYLAYNGDKEVTWSEACGVFGGFCRQART) are Extracellular-facing. Residues 164 to 184 (SVAITFASVACYILLSLISSY) form a helical membrane-spanning segment. The Cytoplasmic portion of the chain corresponds to 185–209 (RLFSAYDPPQPSLGNKGVEIAAFPR).

This sequence belongs to the Casparian strip membrane proteins (CASP) family. As to quaternary structure, homodimer and heterodimers.

The protein localises to the cell membrane. The sequence is that of CASP-like protein 2A1 from Oryza sativa subsp. indica (Rice).